Reading from the N-terminus, the 271-residue chain is Dermonecrotic toxin LhSicTox-alphaIA2aiv (271 aa).

Residue His-3 is part of the active site. 2 residues coordinate Mg(2+): Glu-23 and Asp-25. Catalysis depends on His-39, which acts as the Nucleophile. Cystine bridges form between Cys-43–Cys-49 and Cys-45–Cys-188. Asp-83 contributes to the Mg(2+) binding site.

It belongs to the arthropod phospholipase D family. Class II subfamily. The cofactor is Mg(2+). In terms of tissue distribution, expressed by the venom gland.

It is found in the secreted. It carries out the reaction an N-(acyl)-sphingosylphosphocholine = an N-(acyl)-sphingosyl-1,3-cyclic phosphate + choline. The catalysed reaction is an N-(acyl)-sphingosylphosphoethanolamine = an N-(acyl)-sphingosyl-1,3-cyclic phosphate + ethanolamine. The enzyme catalyses a 1-acyl-sn-glycero-3-phosphocholine = a 1-acyl-sn-glycero-2,3-cyclic phosphate + choline. It catalyses the reaction a 1-acyl-sn-glycero-3-phosphoethanolamine = a 1-acyl-sn-glycero-2,3-cyclic phosphate + ethanolamine. In terms of biological role, dermonecrotic toxins cleave the phosphodiester linkage between the phosphate and headgroup of certain phospholipids (sphingolipid and lysolipid substrates), forming an alcohol (often choline) and a cyclic phosphate. This toxin acts on sphingomyelin (SM). It may also act on ceramide phosphoethanolamine (CPE), lysophosphatidylcholine (LPC) and lysophosphatidylethanolamine (LPE), but not on lysophosphatidylserine (LPS), and lysophosphatidylglycerol (LPG). It acts by transphosphatidylation, releasing exclusively cyclic phosphate products as second products. Induces dermonecrosis, hemolysis, increased vascular permeability, edema, inflammatory response, and platelet aggregation. The sequence is that of Dermonecrotic toxin LhSicTox-alphaIA2aiv from Loxosceles hirsuta (Recluse spider).